The chain runs to 308 residues: Glutaminase (308 aa).

Substrate contacts are provided by Ser-68, Asn-118, Glu-162, Asn-169, Tyr-193, Tyr-244, and Val-262.

Belongs to the glutaminase family. As to quaternary structure, homotetramer.

The catalysed reaction is L-glutamine + H2O = L-glutamate + NH4(+). The sequence is that of Glutaminase from Hahella chejuensis (strain KCTC 2396).